The sequence spans 347 residues: NADH-ubiquinone oxidoreductase chain 2 (347 aa).

11 helical membrane passes run 3–23 (PPIL…VLTS), 25–45 (HWLL…PILM), 60–80 (FLTQ…NLMF), 96–116 (GLVT…FWVP), 122–142 (ISLS…LSVL), 153–173 (LLIT…LNQT), 178–198 (ILAY…TYNP), 200–220 (LMVL…MLFM), 237–257 (LPLM…LPPL), 274–294 (DMII…YFYM), and 323–343 (IILL…TPMM).

Belongs to the complex I subunit 2 family. As to quaternary structure, core subunit of respiratory chain NADH dehydrogenase (Complex I) which is composed of 45 different subunits. Interacts with TMEM242.

The protein localises to the mitochondrion inner membrane. It carries out the reaction a ubiquinone + NADH + 5 H(+)(in) = a ubiquinol + NAD(+) + 4 H(+)(out). In terms of biological role, core subunit of the mitochondrial membrane respiratory chain NADH dehydrogenase (Complex I) which catalyzes electron transfer from NADH through the respiratory chain, using ubiquinone as an electron acceptor. Essential for the catalytic activity and assembly of complex I. In Phoca vitulina (Harbor seal), this protein is NADH-ubiquinone oxidoreductase chain 2.